We begin with the raw amino-acid sequence, 590 residues long: Negative elongation factor D (590 aa).

Residues 15–43 (YGSAAEWGDEADGGQQEDDSGEGEDDAEV) are disordered. The span at 21–43 (WGDEADGGQQEDDSGEGEDDAEV) shows a compositional bias: acidic residues.

This sequence belongs to the NELF-D family. As to quaternary structure, the NELF complex is composed of NELFA, NELFB, NELFCD and NELFE; NELFA and NELFCD form a stable subcomplex that binds primarily through NELFCD to the N-terminus of NELFB. Binds RNA which may help to stabilize the NELF complex on nucleic acid. In vitro, the NELFA:NELFCD subcomplex binds to ssDNA and ssRNA in a sequence- and structure-dependent manner. Interacts with ARAF1. Interacts with PCF11. Interacts with NELFB. Interacts with KAT8.

It localises to the nucleus. Its function is as follows. Essential component of the NELF complex, a complex that negatively regulates the elongation of transcription by RNA polymerase II. The NELF complex, which acts via an association with the DSIF complex and causes transcriptional pausing, is counteracted by the P-TEFb kinase complex. The polypeptide is Negative elongation factor D (NELFCD) (Pongo abelii (Sumatran orangutan)).